The sequence spans 1573 residues: Pentafunctional AROM polypeptide 1 (1573 aa).

The tract at residues 1 to 380 (MAEPTKISIL…YEPKASVVSN (380 aa)) is 3-dehydroquinate synthase. Residues 44-46 (DTN), 81-84 (ENSK), 112-114 (GGV), and D117 each bind NAD(+). R128 contacts 7-phospho-2-dehydro-3-deoxy-D-arabino-heptonate. 137-138 (TT) contacts NAD(+). Residues D144 and K150 each contribute to the 7-phospho-2-dehydro-3-deoxy-D-arabino-heptonate site. K159 provides a ligand contact to NAD(+). Position 160 (N160) interacts with 7-phospho-2-dehydro-3-deoxy-D-arabino-heptonate. Residues 177–180 (FIDT) and N188 each bind NAD(+). E192 is a binding site for Zn(2+). 7-phospho-2-dehydro-3-deoxy-D-arabino-heptonate contacts are provided by residues 192-195 (EVIK) and K246. Catalysis depends on E256, which acts as the Proton acceptor; for 3-dehydroquinate synthase activity. 7-phospho-2-dehydro-3-deoxy-D-arabino-heptonate is bound by residues 260–264 (RNLLN) and H267. H267 is a Zn(2+) binding site. Residue H271 is the Proton acceptor; for 3-dehydroquinate synthase activity of the active site. 2 residues coordinate 7-phospho-2-dehydro-3-deoxy-D-arabino-heptonate: H283 and K352. H283 contacts Zn(2+). An EPSP synthase region spans residues 393–838 (VIPGVPKDLN…WDALKQKFGV (446 aa)). The active-site For EPSP synthase activity is C820. Positions 859–1051 (DASIVIIGMR…RRKRLSFFMS (193 aa)) are shikimate kinase. 866–873 (GMRGAGKT) is an ATP binding site. The tract at residues 1052–1273 (LTLTDLRDSG…AAPGQLSAAE (222 aa)) is 3-dehydroquinase. H1175 serves as the catalytic Proton acceptor; for 3-dehydroquinate dehydratase activity. K1203 functions as the Schiff-base intermediate with substrate; for 3-dehydroquinate dehydratase activity in the catalytic mechanism. A shikimate dehydrogenase region spans residues 1286-1573 (AKKFAIFGKP…NAVLGTDETK (288 aa)).

It in the N-terminal section; belongs to the sugar phosphate cyclases superfamily. Dehydroquinate synthase family. The protein in the 2nd section; belongs to the EPSP synthase family. In the 3rd section; belongs to the shikimate kinase family. This sequence in the 4th section; belongs to the type-I 3-dehydroquinase family. It in the C-terminal section; belongs to the shikimate dehydrogenase family. Homodimer. Requires Zn(2+) as cofactor.

The protein localises to the cytoplasm. It catalyses the reaction 7-phospho-2-dehydro-3-deoxy-D-arabino-heptonate = 3-dehydroquinate + phosphate. It carries out the reaction 3-dehydroquinate = 3-dehydroshikimate + H2O. The enzyme catalyses shikimate + NADP(+) = 3-dehydroshikimate + NADPH + H(+). The catalysed reaction is shikimate + ATP = 3-phosphoshikimate + ADP + H(+). It catalyses the reaction 3-phosphoshikimate + phosphoenolpyruvate = 5-O-(1-carboxyvinyl)-3-phosphoshikimate + phosphate. It functions in the pathway metabolic intermediate biosynthesis; chorismate biosynthesis; chorismate from D-erythrose 4-phosphate and phosphoenolpyruvate: step 2/7. It participates in metabolic intermediate biosynthesis; chorismate biosynthesis; chorismate from D-erythrose 4-phosphate and phosphoenolpyruvate: step 3/7. The protein operates within metabolic intermediate biosynthesis; chorismate biosynthesis; chorismate from D-erythrose 4-phosphate and phosphoenolpyruvate: step 4/7. Its pathway is metabolic intermediate biosynthesis; chorismate biosynthesis; chorismate from D-erythrose 4-phosphate and phosphoenolpyruvate: step 5/7. It functions in the pathway metabolic intermediate biosynthesis; chorismate biosynthesis; chorismate from D-erythrose 4-phosphate and phosphoenolpyruvate: step 6/7. In terms of biological role, the AROM polypeptide catalyzes 5 consecutive enzymatic reactions in prechorismate polyaromatic amino acid biosynthesis. The chain is Pentafunctional AROM polypeptide 1 from Talaromyces marneffei (strain ATCC 18224 / CBS 334.59 / QM 7333) (Penicillium marneffei).